The chain runs to 495 residues: Acyltransferase abl6 (495 aa).

H171 acts as the Proton acceptor in catalysis.

The protein belongs to the plant acyltransferase family.

Functionally, acyltransferase; part of the gene cluster that mediates the biosynthesis of abscisic acid (ABA), a phytohormone that acts antagonistically toward salicylic acid (SA), jasmonic acid (JA) and ethylene (ETH) signaling, to impede plant defense responses. The first step of the pathway catalyzes the reaction from farnesyl diphosphate to alpha-ionylideneethane performed by the alpha-ionylideneethane synthase abl3 via a three-step reaction mechanism involving 2 neutral intermediates, beta-farnesene and allofarnesene. The cytochrome P450 monooxygenase abl1 might then be involved in the conversion of alpha-ionylideneethane to alpha-ionylideneacetic acid. Alpha-ionylideneacetic acid is further converted to abscisic acid in 2 steps involving the cytochrome P450 monooxygenase abl2 and the short-chain dehydrogenase/reductase abl4, via the intermediates 1'-deoxy-ABA or 1',4'-trans-diol-ABA, depending on the order of action of these 2 enzymes. Abl2 is responsible for the hydroxylation of carbon atom C-1' and abl4 might be involved in the oxidation of the C-4' carbon atom. The acyltransferase abl6 seems not essential for the biosynthesis of ABA, but it may acetylate ABA as part of the synthesis of another ABA-related molecule. The polypeptide is Acyltransferase abl6 (Leptosphaeria maculans (strain JN3 / isolate v23.1.3 / race Av1-4-5-6-7-8) (Blackleg fungus)).